Consider the following 604-residue polypeptide: MCGIVGVVGNRNATDILMQGLEKLEYRGYDSAGIFVANANQTNLIKSVGRIADLRAKIGIDVAGSTGIGHTRWATHGQSTEDNAHPHTSQTGRFVLVHNGVIENYLHIKTEFLAGHDFKGQTDTEIAVHLIGKFVEEDKLSVLEAFKKALSIIEGSYAFALMDSQATDTIYVAKNKSPLLIGLGEGYNMVCSDAMAMIRETSEFMEIHDKELVILTKDKVTVTDYDGKELIRDSYTAELDLSDIGKGTYPFYMLKEIDEQPTVMRQLISTYADETGNVQVDPAIITSIQEADRLYILAAGTSYHAGFATKNMLEQLTDTPVELGVASEWGYHMPLLSKKPMFILLSQSGETADSRQVLVKANAMGIPSLTVTNVPGSTLSRESTYTMLIHAGPEIAVASTKAYTAQIAALAFLAKAVGEANGKQEALDFNLVHELSLVAQSIEATLSEKDLVAEKVQALLATTRNAFYIGRGNDYYVAMEAALKLKEISYIQCEGFAAGELKHGTISLIEEDTPVIALISSSQLVASHTRGNIQEVAARGAHVLTVVEEGLDREGDDIIVNKVHPFLAPIAMVIPTQLIAYYASLQRGLDVDKPRNLAKAVTVE.

Cys-2 serves as the catalytic Nucleophile; for GATase activity. A Glutamine amidotransferase type-2 domain is found at 2 to 218 (CGIVGVVGNR…DKELVILTKD (217 aa)). SIS domains are found at residues 284 to 423 (IITS…ANGK) and 456 to 594 (VQAL…VDKP). The For Fru-6P isomerization activity role is filled by Lys-599.

Homodimer.

The protein localises to the cytoplasm. The enzyme catalyses D-fructose 6-phosphate + L-glutamine = D-glucosamine 6-phosphate + L-glutamate. Its function is as follows. Catalyzes the first step in hexosamine metabolism, converting fructose-6P into glucosamine-6P using glutamine as a nitrogen source. The chain is Glutamine--fructose-6-phosphate aminotransferase [isomerizing] from Streptococcus pyogenes serotype M18 (strain MGAS8232).